A 204-amino-acid chain; its full sequence is uncharacterized protein (204 aa).

This is an uncharacterized protein from Methanocaldococcus jannaschii (strain ATCC 43067 / DSM 2661 / JAL-1 / JCM 10045 / NBRC 100440) (Methanococcus jannaschii).